The sequence spans 68 residues: Large ribosomal subunit protein uL29 (68 aa).

It belongs to the universal ribosomal protein uL29 family.

The sequence is that of Large ribosomal subunit protein uL29 from Leuconostoc citreum (strain KM20).